An 800-amino-acid polypeptide reads, in one-letter code: Chondroitin sulfate synthase 1 (800 aa).

At 1 to 7 (MAARGRR) the chain is on the cytoplasmic side. The chain crosses the membrane as a helical; Signal-anchor for type II membrane protein span at residues 8-28 (AWLSMLLGLVLGFVLASRLVL). The Lumenal portion of the chain corresponds to 29-800 (PRASELKRVG…GGSHGSARTA (772 aa)). The disordered stretch occupies residues 36-66 (RVGPRRRPSPEGCRPGQEASQPGGARGDARG). Residues Asn188 and Asn622 are each glycosylated (N-linked (GlcNAc...) asparagine). Residues Asp632 and His746 each coordinate a divalent metal cation.

Belongs to the chondroitin N-acetylgalactosaminyltransferase family. Requires Co(2+) as cofactor. It depends on Mn(2+) as a cofactor. Cd(2+) is required as a cofactor.

The protein localises to the golgi apparatus. The protein resides in the golgi stack membrane. It is found in the secreted. The enzyme catalyses 3-O-(beta-D-GlcA-(1-&gt;3)-beta-D-GalNAc-(1-&gt;4)-beta-D-GlcA-(1-&gt;3)-beta-D-Gal-(1-&gt;3)-beta-D-Gal-(1-&gt;4)-beta-D-Xyl)-L-seryl-[protein] + UDP-N-acetyl-alpha-D-galactosamine = 3-O-(beta-D-GalNAc-(1-&gt;4)-beta-D-GlcA-(1-&gt;3)-beta-D-GalNAc-(1-&gt;4)-beta-D-GlcA-(1-&gt;3)-beta-D-Gal-(1-&gt;3)-beta-D-Gal-(1-&gt;4)-beta-D-Xyl)-L-seryl-[protein] + UDP + H(+). The catalysed reaction is 3-O-{beta-D-GlcA-(1-&gt;3)-[beta-D-GalNAc-(1-&gt;4)-beta-D-GlcA-(1-&gt;3)](n)-beta-D-GalNAc-(1-&gt;4)-beta-D-GlcA-(1-&gt;3)-beta-D-Gal-(1-&gt;3)-beta-D-Gal-(1-&gt;4)-beta-D-Xyl}-L-seryl-[protein] + UDP-N-acetyl-alpha-D-galactosamine = 3-O-{[beta-D-GalNAc-(1-&gt;4)-beta-D-GlcA-(1-&gt;3)](n+1)-beta-D-GalNAc-(1-&gt;4)-beta-D-GlcA-(1-&gt;3)-beta-D-Gal-(1-&gt;3)-beta-D-Gal-(1-&gt;4)-beta-D-Xyl}-L-seryl-[protein] + UDP + H(+). It catalyses the reaction 3-O-(beta-D-GalNAc-(1-&gt;4)-beta-D-GlcA-(1-&gt;3)-beta-D-Gal-(1-&gt;3)-beta-D-Gal-(1-&gt;4)-beta-D-Xyl)-L-seryl-[protein] + UDP-alpha-D-glucuronate = 3-O-(beta-D-GlcA-(1-&gt;3)-beta-D-GalNAc-(1-&gt;4)-beta-D-GlcA-(1-&gt;3)-beta-D-Gal-(1-&gt;3)-beta-D-Gal-(1-&gt;4)-beta-D-Xyl)-L-seryl-[protein] + UDP + H(+). It carries out the reaction 3-O-{[beta-D-GalNAc-(1-&gt;4)-beta-D-GlcA-(1-&gt;3)](n)-beta-D-GalNAc-(1-&gt;4)-beta-D-GlcA-(1-&gt;3)-beta-D-Gal-(1-&gt;3)-beta-D-Gal-(1-&gt;4)-beta-D-Xyl}-L-seryl-[protein] + UDP-alpha-D-glucuronate = 3-O-{beta-D-GlcA-(1-&gt;3)-[beta-D-GalNAc-(1-&gt;4)-beta-D-GlcA-(1-&gt;3)](n)-beta-D-GalNAc-(1-&gt;4)-beta-D-GlcA-(1-&gt;3)-beta-D-Gal-(1-&gt;3)-beta-D-Gal-(1-&gt;4)-beta-D-Xyl}-L-seryl-[protein] + UDP + H(+). In terms of biological role, has both beta-1,3-glucuronic acid and beta-1,4-N-acetylgalactosamine transferase activity. Transfers glucuronic acid (GlcUA) from UDP-GlcUA and N-acetylgalactosamine (GalNAc) from UDP-GalNAc to the non-reducing end of the elongating chondroitin polymer. Involved in the negative control of osteogenesis likely through the modulation of NOTCH signaling. The chain is Chondroitin sulfate synthase 1 (Chsy1) from Mus musculus (Mouse).